A 422-amino-acid polypeptide reads, in one-letter code: Mannosylglycerate synthase (422 aa).

GDP-alpha-D-mannose-binding positions include 7 to 11, Gln66, Lys77, Asp101, and 101 to 102; these read PFKEE and DS. Residues Arg132 and 137-140 contribute to the (R)-glycerate site; that span reads AMIT. Positions 164, 193, and 221 each coordinate GDP-alpha-D-mannose.

Belongs to the glycosyltransferase 78 family.

The catalysed reaction is (R)-glycerate + GDP-alpha-D-mannose = (2R)-2-O-(alpha-D-mannosyl)-glycerate + GDP + H(+). The enzyme catalyses GDP-alpha-D-glucose + (R)-glycerate = (2R)-2-O-(alpha-D-glucopyranosyl)-glycerate + GDP + H(+). With respect to regulation, activity is not dependent on divalent cations, but it is enhanced by Mg(2+). Its function is as follows. Involved in the biosynthesis of the compatible solute alpha-D-mannosyl-glycerate (MG). Catalyzes the condensation of GDP-alpha-D-mannose (GDP-Man) with D-glycerate to produce alpha-D-mannosyl-glycerate. Can also use GDP-alpha-D-glucose (GDP-Glc) as sugar donor to produce alpha-D-glucopyranosyl-glycerate (GG). The sequence is that of Mannosylglycerate synthase from Selaginella moellendorffii (Spikemoss).